We begin with the raw amino-acid sequence, 140 residues long: MLKTISPLISPELLKVLAEMGHGDEIIFSDAHFPAHSMGPQVIRADGLKVSDLLRAIIPLFELDSYAPPLVMMAAVEGDSLDPTVEARYRDALSLQTPCPEIVRIDRYAFYERAQKAFAIVITGECAKYGNILLKKGVTP.

His-22 serves as the catalytic Proton donor. Substrate is bound by residues Asp-30, Arg-107, and 129 to 131; that span reads YGN.

It belongs to the RbsD / FucU family. FucU mutarotase subfamily. In terms of assembly, homodecamer.

Its subcellular location is the cytoplasm. It carries out the reaction alpha-L-fucose = beta-L-fucose. The protein operates within carbohydrate metabolism; L-fucose metabolism. Its function is as follows. Involved in the anomeric conversion of L-fucose. The protein is L-fucose mutarotase of Citrobacter koseri (strain ATCC BAA-895 / CDC 4225-83 / SGSC4696).